The following is a 355-amino-acid chain: Probable F-box protein At5g36000 (355 aa).

Basic and acidic residues predominate over residues Met1–Gly14. The segment at Met1 to Gly44 is disordered. The 47-residue stretch at Gln78–Ala124 folds into the F-box; degenerate domain.

The polypeptide is Probable F-box protein At5g36000 (Arabidopsis thaliana (Mouse-ear cress)).